A 380-amino-acid chain; its full sequence is Cytochrome b (380 aa).

4 consecutive transmembrane segments (helical) span residues 34 to 54, 78 to 99, 114 to 134, and 179 to 199; these read FGSLLAVCLITQILTGLLLAM, WLLHNLHANGASFFFICIFLHI, WNTGVVLLLTLMATAFVGYVL, and FFALHFLLPFMIAGITIIHLM. Heme b is bound by residues His84 and His98. Heme b contacts are provided by His183 and His197. A ubiquinone is bound at residue His202. 4 helical membrane passes run 227–247, 289–309, 321–341, and 348–368; these read IKDILGLTIMLTPLLTLTLFS, LGGVLALAASVLILLLIPFLH, LSQTLFWLLVANLLILTWVGS, and FIIIGQMASLSYFTILLILFP.

The protein belongs to the cytochrome b family. In terms of assembly, the cytochrome bc1 complex contains 11 subunits: 3 respiratory subunits (MT-CYB, CYC1 and UQCRFS1), 2 core proteins (UQCRC1 and UQCRC2) and 6 low-molecular weight proteins (UQCRH/QCR6, UQCRB/QCR7, UQCRQ/QCR8, UQCR10/QCR9, UQCR11/QCR10 and a cleavage product of UQCRFS1). This cytochrome bc1 complex then forms a dimer. It depends on heme b as a cofactor.

The protein resides in the mitochondrion inner membrane. Its function is as follows. Component of the ubiquinol-cytochrome c reductase complex (complex III or cytochrome b-c1 complex) that is part of the mitochondrial respiratory chain. The b-c1 complex mediates electron transfer from ubiquinol to cytochrome c. Contributes to the generation of a proton gradient across the mitochondrial membrane that is then used for ATP synthesis. The sequence is that of Cytochrome b (MT-CYB) from Meleagris gallopavo (Wild turkey).